The following is a 457-amino-acid chain: RuvB-like helicase 1 (457 aa).

73–80 (GGPSTGKT) contributes to the ATP binding site.

Belongs to the RuvB family. In terms of assembly, may form heterododecamers with RVB2. Component of the SWR1 chromatin remodeling complex, the INO80 chromatin remodeling complex, and of the R2TP complex.

It is found in the nucleus. It catalyses the reaction ATP + H2O = ADP + phosphate + H(+). Its function is as follows. DNA helicase which participates in several chromatin remodeling complexes, including the SWR1 and the INO80 complexes. The SWR1 complex mediates the ATP-dependent exchange of histone H2A for the H2A variant HZT1 leading to transcriptional regulation of selected genes by chromatin remodeling. The INO80 complex remodels chromatin by shifting nucleosomes and is involved in DNA repair. Also involved in pre-rRNA processing. The polypeptide is RuvB-like helicase 1 (RVB1) (Candida glabrata (strain ATCC 2001 / BCRC 20586 / JCM 3761 / NBRC 0622 / NRRL Y-65 / CBS 138) (Yeast)).